The chain runs to 431 residues: Argininosuccinate lyase (431 aa).

The protein belongs to the lyase 1 family. Argininosuccinate lyase subfamily.

Its subcellular location is the cytoplasm. The enzyme catalyses 2-(N(omega)-L-arginino)succinate = fumarate + L-arginine. It participates in amino-acid biosynthesis; L-arginine biosynthesis; L-arginine from L-ornithine and carbamoyl phosphate: step 3/3. The sequence is that of Argininosuccinate lyase from Xanthomonas campestris pv. campestris (strain ATCC 33913 / DSM 3586 / NCPPB 528 / LMG 568 / P 25).